A 201-amino-acid chain; its full sequence is Large ribosomal subunit protein uL4 (201 aa).

The tract at residues 39-67 (ARQGSRAQKTRSEVAGGGRKPWKQKGSGR) is disordered.

Belongs to the universal ribosomal protein uL4 family. As to quaternary structure, part of the 50S ribosomal subunit.

In terms of biological role, one of the primary rRNA binding proteins, this protein initially binds near the 5'-end of the 23S rRNA. It is important during the early stages of 50S assembly. It makes multiple contacts with different domains of the 23S rRNA in the assembled 50S subunit and ribosome. Forms part of the polypeptide exit tunnel. This chain is Large ribosomal subunit protein uL4, found in Marinomonas sp. (strain MWYL1).